The sequence spans 206 residues: Ras-related protein Rab-7b (206 aa).

15–22 (GDSGVGKT) is a binding site for GTP. A phosphoserine mark is found at Ser17 and Ser23. 3 positions are modified to phosphothreonine: Thr34, Thr40, and Thr64. GTP is bound by residues 34–40 (TQQYRAT) and 63–67 (DTAGQ). An Effector region motif is present at residues 37 to 45 (YRATVGADF). Ser72 carries the phosphoserine modification. 2 positions are modified to phosphotyrosine: Tyr78 and Tyr88. GTP-binding positions include 125 to 128 (NKLD) and 157 to 158 (AK). S-geranylgeranyl cysteine attachment occurs at residues Cys205 and Cys206.

It belongs to the small GTPase superfamily. Rab family. In terms of processing, glycosylated.

It is found in the cytoplasm. It localises to the cytoskeleton. This is Ras-related protein Rab-7b from Paramecium octaurelia.